Reading from the N-terminus, the 275-residue chain is Elongation factor Ts (275 aa).

Residues 76-79 are involved in Mg(2+) ion dislocation from EF-Tu; that stretch reads TDFV.

The protein belongs to the EF-Ts family.

It is found in the cytoplasm. In terms of biological role, associates with the EF-Tu.GDP complex and induces the exchange of GDP to GTP. It remains bound to the aminoacyl-tRNA.EF-Tu.GTP complex up to the GTP hydrolysis stage on the ribosome. The sequence is that of Elongation factor Ts from Mycolicibacterium paratuberculosis (strain ATCC BAA-968 / K-10) (Mycobacterium paratuberculosis).